Consider the following 438-residue polypeptide: Transmembrane protein 184C (438 aa).

The next 7 membrane-spanning stretches (helical) occupy residues 17–37 (LVAV…VWEL), 48–68 (AWFI…WVIL), 86–106 (ILWM…YPGI), 179–199 (YTVV…LGIY), 212–232 (YLVI…LLFY), 254–274 (VVFV…VGVI), and 287–307 (AVAT…AAIA). Positions 355 to 438 (RGHPRKKLFP…KEPSDKSVDS (84 aa)) are disordered. Composition is skewed to low complexity over residues 374–390 (SLLS…ASSM) and 404–413 (TVTPQTTPTT). Position 422 is a phosphoserine (serine 422). Residues 425–438 (IGEKKEPSDKSVDS) show a composition bias toward basic and acidic residues.

Belongs to the TMEM184 family. In terms of tissue distribution, widely expressed with higher expression in lung, kidney, spleen, pancreas, thymus, prostate, testis, ovary, small intestine and thyroid.

It is found in the membrane. Its function is as follows. Possible tumor suppressor which may play a role in cell growth. The chain is Transmembrane protein 184C (TMEM184C) from Homo sapiens (Human).